A 179-amino-acid chain; its full sequence is Probable protein archease (179 aa).

Ca(2+) is bound by residues Asp55, Asp178, and Val179.

Belongs to the archease family.

Its function is as follows. Activates the tRNA-splicing ligase complex by facilitating the enzymatic turnover of catalytic subunit RtcB. Acts by promoting the guanylylation of RtcB, a key intermediate step in tRNA ligation. Can also alter the NTP specificity of RtcB such that ATP, dGTP or ITP is used efficiently. The polypeptide is Probable protein archease (Mycobacterium tuberculosis (strain CDC 1551 / Oshkosh)).